Consider the following 480-residue polypeptide: Ribulose bisphosphate carboxylase large chain (480 aa).

Residues 1–2 (MS) constitute a propeptide that is removed on maturation. Pro-3 bears the N-acetylproline mark. Lys-14 is modified (N6,N6,N6-trimethyllysine). 2 residues coordinate substrate: Asn-123 and Thr-173. Lys-175 serves as the catalytic Proton acceptor. Lys-177 contributes to the substrate binding site. Mg(2+)-binding residues include Lys-201, Asp-203, and Glu-204. The residue at position 201 (Lys-201) is an N6-carboxylysine. Residue His-294 is the Proton acceptor of the active site. 3 residues coordinate substrate: Arg-295, His-327, and Ser-379.

It belongs to the RuBisCO large chain family. Type I subfamily. As to quaternary structure, heterohexadecamer of 8 large chains and 8 small chains; disulfide-linked. The disulfide link is formed within the large subunit homodimers. Mg(2+) serves as cofactor. The disulfide bond which can form in the large chain dimeric partners within the hexadecamer appears to be associated with oxidative stress and protein turnover.

Its subcellular location is the plastid. The protein localises to the chloroplast. The enzyme catalyses 2 (2R)-3-phosphoglycerate + 2 H(+) = D-ribulose 1,5-bisphosphate + CO2 + H2O. It catalyses the reaction D-ribulose 1,5-bisphosphate + O2 = 2-phosphoglycolate + (2R)-3-phosphoglycerate + 2 H(+). Its function is as follows. RuBisCO catalyzes two reactions: the carboxylation of D-ribulose 1,5-bisphosphate, the primary event in carbon dioxide fixation, as well as the oxidative fragmentation of the pentose substrate in the photorespiration process. Both reactions occur simultaneously and in competition at the same active site. The polypeptide is Ribulose bisphosphate carboxylase large chain (Acorus calamus var. americanus (American sweet flag)).